The following is a 225-amino-acid chain: Glutathione S-transferase Mu 3 (225 aa).

The GST N-terminal domain maps to 5–92 (SSMVLGYWDI…YIARKHNMCG (88 aa)). Residues 11–12 (YW), 50–54 (WLDVK), and 63–64 (NL) contribute to the glutathione site. Residue K54 forms a Glycyl lysine isopeptide (Lys-Gly) (interchain with G-Cter in SUMO2) linkage. K73 is covalently cross-linked (Glycyl lysine isopeptide (Lys-Gly) (interchain with G-Cter in SUMO2)). Position 76–77 (76–77 (QS)) interacts with glutathione. A GST C-terminal domain is found at 94–212 (TEEEKIRVDI…QSDQFCKMPI (119 aa)). Y120 lines the substrate pocket.

This sequence belongs to the GST superfamily. Mu family. As to quaternary structure, homodimer. The N-terminus is blocked. Testis and brain.

It localises to the cytoplasm. It catalyses the reaction RX + glutathione = an S-substituted glutathione + a halide anion + H(+). Its function is as follows. Conjugation of reduced glutathione to a wide number of exogenous and endogenous hydrophobic electrophiles. May govern uptake and detoxification of both endogenous compounds and xenobiotics at the testis and brain blood barriers. In Homo sapiens (Human), this protein is Glutathione S-transferase Mu 3 (GSTM3).